The sequence spans 764 residues: Putative wall-associated receptor kinase-like 13 (764 aa).

The first 26 residues, 1 to 26, serve as a signal peptide directing secretion; that stretch reads MRGNKNYYFLSLLYFLSLPILHFSSC. The Extracellular segment spans residues 27–379; sequence THKCGDIQIP…HRCIDYHIPE (353 aa). N78, N114, N121, N164, N233, N238, N259, and N283 each carry an N-linked (GlcNAc...) asparagine glycan. The interval 308–372 is atypical EGF-like; the sequence is CTCDNHIASG…CINTSGGHRC (65 aa). 3 disulfide bridges follow: C310–C323, C345–C363, and C352–C372. Residue N365 is glycosylated (N-linked (GlcNAc...) asparagine). A helical transmembrane segment spans residues 380 to 400; it reads VMLGLGAGFFVLIVGGGIWWW. Over 401 to 764 the chain is Cytoplasmic; the sequence is RKLLRKRRMT…SGSTEIARSM (364 aa). Residues 454–728 enclose the Protein kinase domain; sequence FNDNRVIGQG…REVSTALERI (275 aa). Residues 460-468 and K482 each bind ATP; that span reads IGQGGQGTV. Position 527 is a phosphotyrosine (Y527). D579 functions as the Proton acceptor in the catalytic mechanism. Residues T613 and T618 each carry the phosphothreonine modification. Y626 is modified (phosphotyrosine).

This sequence belongs to the protein kinase superfamily. Ser/Thr protein kinase family.

It localises to the membrane. It carries out the reaction L-seryl-[protein] + ATP = O-phospho-L-seryl-[protein] + ADP + H(+). It catalyses the reaction L-threonyl-[protein] + ATP = O-phospho-L-threonyl-[protein] + ADP + H(+). Its function is as follows. Putative serine/threonine-protein kinase that may function as a signaling receptor of extracellular matrix component. The chain is Putative wall-associated receptor kinase-like 13 (WAKL13) from Arabidopsis thaliana (Mouse-ear cress).